We begin with the raw amino-acid sequence, 357 residues long: MEQKQRRFTKNIFVLDANGKTLCGRIAKLSSQPYCQIKIGRVIAFKPVKNPEPKGYVLNVPGPGAYRIQDGQDIISLMLTPHGVEATTERWEEWKFEGVSVTPMATRVQHNGVMVDAEIKYCKGMGIVQPYMRNDFDRNEMPDLPGVMRSNYDVRELRQKIQNERESAPRLQVQSVSPREESRWMDDDEAKVDEEAKEMIPGPSRLKKLREARSNVFKEVEAEINWNLDEKDEEDRDEREDEEQVKTLSDDDEQGEDASDDEHPKTHITKEYIEKVAKQIKLKDERFMSLSSAMPPASGGFDRMIVTKKLKWQNVPLYCFDESSKRYELQCVGACERVAFVSKDMSLIILRSAFRRL.

Disordered stretches follow at residues 162-199 (QNER…AKEM) and 228-268 (LDEK…KTHI). Acidic residues-rich tracts occupy residues 230-243 (EKDE…EDEE) and 250-260 (DDDEQGEDASD).

Belongs to the orbivirus non-structural protein NS2 family.

Single-stranded RNA-binding protein. This chain is Non-structural protein NS2 (Segment-8), found in Antilocapra americana (Pronghorn).